Reading from the N-terminus, the 143-residue chain is Large ribosomal subunit protein uL11 (143 aa).

This sequence belongs to the universal ribosomal protein uL11 family. As to quaternary structure, part of the ribosomal stalk of the 50S ribosomal subunit. Interacts with L10 and the large rRNA to form the base of the stalk. L10 forms an elongated spine to which L12 dimers bind in a sequential fashion forming a multimeric L10(L12)X complex. One or more lysine residues are methylated.

In terms of biological role, forms part of the ribosomal stalk which helps the ribosome interact with GTP-bound translation factors. In Bordetella parapertussis (strain 12822 / ATCC BAA-587 / NCTC 13253), this protein is Large ribosomal subunit protein uL11.